The following is a 136-amino-acid chain: NADPH-dependent 7-cyano-7-deazaguanine reductase (136 aa).

Cys50 serves as the catalytic Thioimide intermediate. The active-site Proton donor is Asp57. Substrate-binding positions include 72–74 and 91–92; these read YEL and HE.

The protein belongs to the GTP cyclohydrolase I family. QueF type 1 subfamily.

Its subcellular location is the cytoplasm. It carries out the reaction 7-aminomethyl-7-carbaguanine + 2 NADP(+) = 7-cyano-7-deazaguanine + 2 NADPH + 3 H(+). It functions in the pathway tRNA modification; tRNA-queuosine biosynthesis. Functionally, catalyzes the NADPH-dependent reduction of 7-cyano-7-deazaguanine (preQ0) to 7-aminomethyl-7-deazaguanine (preQ1). The protein is NADPH-dependent 7-cyano-7-deazaguanine reductase of Prochlorococcus marinus (strain MIT 9215).